A 454-amino-acid chain; its full sequence is Sensor histidine kinase YkoH (454 aa).

The Cytoplasmic portion of the chain corresponds to 1–12 (MKLKTKIHLYTS). A helical membrane pass occupies residues 13-33 (ISLLILLILVHTAVYLIFSSA). Over 34 to 153 (LTSKDAARLA…NTEESLFLLK (120 aa)) the chain is Extracellular. Residues 154 to 174 (IILIAASAAVCIASFFAGSLL) traverse the membrane as a helical segment. Over 175–454 (ARRIINPIRR…QFSEQNGGGR (280 aa)) the chain is Cytoplasmic. The HAMP domain maps to 176–230 (RRIINPIRRLMITMKDIQRDKEFKTISLEGQSNDELYQMGLTFNEMAMMLKEHYD). Residues 238–450 (DASHELKTPL…AVTMQFSEQN (213 aa)) enclose the Histidine kinase domain. The residue at position 241 (His241) is a Phosphohistidine; by autocatalysis.

The protein localises to the cell membrane. It catalyses the reaction ATP + protein L-histidine = ADP + protein N-phospho-L-histidine.. Probable member of the two-component regulatory system YkoH/YkoG. Potentially phosphorylates YkoG. This is Sensor histidine kinase YkoH (ykoH) from Bacillus subtilis (strain 168).